We begin with the raw amino-acid sequence, 423 residues long: Alpha-1-antichymotrypsin (423 aa).

An N-terminal signal peptide occupies residues 1 to 23 (MERMLPFLALGLLVAGFCPAVLC). N-linked (GlcNAc...) asparagine glycosylation is found at Asn-93, Asn-106, Asn-127, Asn-186, and Asn-271. An RCL region spans residues 369-394 (GTEASAATAVKITLLSALVDPMTIVR).

It belongs to the serpin family. Interacts with DNAJC1. As to expression, plasma.

It localises to the secreted. Although its physiological function is unclear, it can inhibit neutrophil cathepsin G and mast cell chymase, both of which can convert angiotensin-1 to the active angiotensin-2. This chain is Alpha-1-antichymotrypsin (SERPINA3), found in Pongo abelii (Sumatran orangutan).